The sequence spans 191 residues: Ferric nitrobindin-like protein (191 aa).

A GXWXGXG motif is present at residues 20-26 (GNWAGAG).

It belongs to the nitrobindin family.

This chain is Ferric nitrobindin-like protein, found in Streptomyces avermitilis (strain ATCC 31267 / DSM 46492 / JCM 5070 / NBRC 14893 / NCIMB 12804 / NRRL 8165 / MA-4680).